Reading from the N-terminus, the 252-residue chain is MKTVTVRDLVVGEGAPKIIVSLMGKTITDVKSEALAYREADFDILEWRVDHFANVTTAESVLEAAGAIREIITDKPLLFTFRSAKEGGEQALTTGQYIALNRAAVDSGLVDMIDLELFTGDDEVKATVGYAHQHNVAVIMSNHDFHKTPAAEEIVQRLRKMQELGADIPKIAVMPQTKADVLTLLTATVEMQERYADRPIITMSMSKTGVISRLAGEVFGSAATFGAVKKASAPGQISVADLRTVLTILHQA.

Residues serine 21, 46 to 48 (EWR), and arginine 82 contribute to the 3-dehydroquinate site. Histidine 143 acts as the Proton donor/acceptor in catalysis. Residue lysine 170 is the Schiff-base intermediate with substrate of the active site. 3 residues coordinate 3-dehydroquinate: arginine 213, serine 232, and glutamine 236.

It belongs to the type-I 3-dehydroquinase family. Homodimer.

The catalysed reaction is 3-dehydroquinate = 3-dehydroshikimate + H2O. The protein operates within metabolic intermediate biosynthesis; chorismate biosynthesis; chorismate from D-erythrose 4-phosphate and phosphoenolpyruvate: step 3/7. Involved in the third step of the chorismate pathway, which leads to the biosynthesis of aromatic amino acids. Catalyzes the cis-dehydration of 3-dehydroquinate (DHQ) and introduces the first double bond of the aromatic ring to yield 3-dehydroshikimate. The chain is 3-dehydroquinate dehydratase from Salmonella dublin (strain CT_02021853).